The primary structure comprises 583 residues: 2-succinyl-5-enolpyruvyl-6-hydroxy-3-cyclohexene-1-carboxylate synthase (583 aa).

Belongs to the TPP enzyme family. MenD subfamily. Homodimer. Mg(2+) serves as cofactor. It depends on Mn(2+) as a cofactor. Requires thiamine diphosphate as cofactor.

The enzyme catalyses isochorismate + 2-oxoglutarate + H(+) = 5-enolpyruvoyl-6-hydroxy-2-succinyl-cyclohex-3-ene-1-carboxylate + CO2. It functions in the pathway quinol/quinone metabolism; 1,4-dihydroxy-2-naphthoate biosynthesis; 1,4-dihydroxy-2-naphthoate from chorismate: step 2/7. The protein operates within quinol/quinone metabolism; menaquinone biosynthesis. Catalyzes the thiamine diphosphate-dependent decarboxylation of 2-oxoglutarate and the subsequent addition of the resulting succinic semialdehyde-thiamine pyrophosphate anion to isochorismate to yield 2-succinyl-5-enolpyruvyl-6-hydroxy-3-cyclohexene-1-carboxylate (SEPHCHC). The chain is 2-succinyl-5-enolpyruvyl-6-hydroxy-3-cyclohexene-1-carboxylate synthase from Chlorobaculum parvum (strain DSM 263 / NCIMB 8327) (Chlorobium vibrioforme subsp. thiosulfatophilum).